Consider the following 240-residue polypeptide: Uridylate kinase (240 aa).

13–16 (KFSG) provides a ligand contact to ATP. Position 55 (Gly-55) interacts with UMP. ATP-binding residues include Gly-56 and Arg-60. Residues Asp-76 and 137-144 (TGNPFFTT) each bind UMP. Residues Thr-164, Tyr-170, and Asp-173 each contribute to the ATP site.

It belongs to the UMP kinase family. Homohexamer.

The protein resides in the cytoplasm. It catalyses the reaction UMP + ATP = UDP + ADP. It functions in the pathway pyrimidine metabolism; CTP biosynthesis via de novo pathway; UDP from UMP (UMPK route): step 1/1. With respect to regulation, inhibited by UTP. In terms of biological role, catalyzes the reversible phosphorylation of UMP to UDP. This chain is Uridylate kinase, found in Helicobacter pylori (strain ATCC 700392 / 26695) (Campylobacter pylori).